We begin with the raw amino-acid sequence, 321 residues long: Serine/threonine-protein phosphatase PP1 (321 aa).

Positions 60, 62, 88, and 120 each coordinate Mn(2+). Histidine 121 (proton donor) is an active-site residue. Histidine 169 and histidine 244 together coordinate Mn(2+). Residues 298–321 (KKLTNDSNGRPLTPPRNKQQKPKK) form a disordered region.

The protein belongs to the PPP phosphatase family. As to quaternary structure, interacts with dpiA. Mn(2+) serves as cofactor.

It carries out the reaction O-phospho-L-seryl-[protein] + H2O = L-seryl-[protein] + phosphate. It catalyses the reaction O-phospho-L-threonyl-[protein] + H2O = L-threonyl-[protein] + phosphate. Its activity is regulated as follows. Inhibited by okadaic acid, tautomycin and calyculin A. Inhibited by phosphatase inhibitor 2 (dpiA). Functionally, protein phosphatase activity in vitro. The polypeptide is Serine/threonine-protein phosphatase PP1 (pppB) (Dictyostelium discoideum (Social amoeba)).